The sequence spans 343 residues: Aspartate carbamoyltransferase catalytic subunit (343 aa).

Residues Arg-91 and Thr-92 each coordinate carbamoyl phosphate. Lys-119 provides a ligand contact to L-aspartate. Positions 141, 171, and 174 each coordinate carbamoyl phosphate. L-aspartate is bound by residues Arg-204 and Arg-259. Gly-300 and Pro-301 together coordinate carbamoyl phosphate.

This sequence belongs to the aspartate/ornithine carbamoyltransferase superfamily. ATCase family. Heterododecamer (2C3:3R2) of six catalytic PyrB chains organized as two trimers (C3), and six regulatory PyrI chains organized as three dimers (R2).

It catalyses the reaction carbamoyl phosphate + L-aspartate = N-carbamoyl-L-aspartate + phosphate + H(+). It functions in the pathway pyrimidine metabolism; UMP biosynthesis via de novo pathway; (S)-dihydroorotate from bicarbonate: step 2/3. Its function is as follows. Catalyzes the condensation of carbamoyl phosphate and aspartate to form carbamoyl aspartate and inorganic phosphate, the committed step in the de novo pyrimidine nucleotide biosynthesis pathway. This Burkholderia vietnamiensis (strain G4 / LMG 22486) (Burkholderia cepacia (strain R1808)) protein is Aspartate carbamoyltransferase catalytic subunit.